A 77-amino-acid chain; its full sequence is Acyl carrier protein (77 aa).

The Carrier domain occupies 2 to 77 (SDIADRVKKI…DAVKFISEAA (76 aa)). The residue at position 37 (Ser37) is an O-(pantetheine 4'-phosphoryl)serine.

It belongs to the acyl carrier protein (ACP) family. Post-translationally, 4'-phosphopantetheine is transferred from CoA to a specific serine of apo-ACP by AcpS. This modification is essential for activity because fatty acids are bound in thioester linkage to the sulfhydryl of the prosthetic group.

Its subcellular location is the cytoplasm. Its pathway is lipid metabolism; fatty acid biosynthesis. Functionally, carrier of the growing fatty acid chain in fatty acid biosynthesis. The protein is Acyl carrier protein of Cereibacter sphaeroides (strain ATCC 17029 / ATH 2.4.9) (Rhodobacter sphaeroides).